We begin with the raw amino-acid sequence, 4351 residues long: Protocadherin Fat 2 (4351 aa).

The signal sequence occupies residues 1–18 (MTLVLLGLAILLLHRAAC). Topologically, residues 19-4050 (EKSLEETIPP…IKRGDWGQQE (4032 aa)) are extracellular. 2 Cadherin domains span residues 34–148 (THSL…KPLF) and 149–256 (SPPS…PPAI). N39, N210, N280, and N330 each carry an N-linked (GlcNAc...) asparagine glycan. Cadherin domains are found at residues 363-458 (EKAV…APVF), 459-564 (NRSS…QPMF), 565-669 (EEVN…VPVQ), 716-820 (DHFP…PPRF), 821-925 (PPGG…PPQC), 926-1032 (ITEH…SPHF), 1033-1142 (SSFV…RPVF), 1138-1242 (SRPV…PPMF), 1243-1346 (SHKL…SSIP), 1350-1448 (DESY…RPQF), 1449-1555 (LQDH…SPHF), 1556-1660 (TQLR…APVF), 1661-1758 (SKDE…PPAF), 1759-1872 (GKPT…PPRF), 1873-1968 (SEQI…SLQF), 1969-2070 (DQDV…IPEF), 2071-2171 (QHLP…NPLF), 2172-2272 (QSPY…PPTF), 2273-2379 (SQLV…PPKF), 2380-2481 (REPQ…SPEF), 2482-2585 (QQNV…APQF), 2586-2692 (KASG…LPKF), 2693-2799 (SEPL…RPVF), 2800-2908 (EADP…PPRF), 2909-3013 (ASED…SPQC), 3014-3115 (SQLL…APRF), 3116-3220 (FPSH…LPIF), 3221-3323 (LNAE…HPRF), 3324-3428 (THDL…PPRF), 3429-3533 (FQLN…PPST), and 3534-3631 (LPLE…VPQQ). 4 N-linked (GlcNAc...) asparagine glycosylation sites follow: N459, N568, N627, and N789. N-linked (GlcNAc...) asparagine glycosylation is present at N996. 3 N-linked (GlcNAc...) asparagine glycosylation sites follow: N1175, N1276, and N1417. N1899, N1998, N2007, N2102, N2165, N2183, N2325, N2368, N2387, N2430, N2470, N2547, and N2597 each carry an N-linked (GlcNAc...) asparagine glycan. N3127, N3278, and N3312 each carry an N-linked (GlcNAc...) asparagine glycan. Residues N3432, N3603, N3770, N3774, N3815, N3842, N3875, and N3906 are each glycosylated (N-linked (GlcNAc...) asparagine). The region spanning 3775-3946 (GTTLRFSGQS…RLETWALSQC (172 aa)) is the Laminin G-like domain. Disulfide bonds link C3914-C3946, C3953-C3964, C3958-C3974, and C3976-C3985. EGF-like domains are found at residues 3949–3986 (PGTA…RNCE) and 3988–4024 (GREN…DRCE). N-linked (GlcNAc...) asparagine glycosylation occurs at N3991. Cystine bridges form between C3992-C4003, C3997-C4012, and C4014-C4023. The chain crosses the membrane as a helical span at residues 4051–4071 (FLVITVALPLVIIATVGLLLY). The Cytoplasmic segment spans residues 4072–4351 (CRRRKSHKPV…DYGSCEEVMF (280 aa)). The segment at 4316–4340 (VNGGPATGRSQPRAPPNYEGSDMVE) is disordered.

As to quaternary structure, homodimer. Cerebellum-specific expression. Expressed in thin parallel fibers of cerebellar granule cells.

It is found in the cell membrane. Its subcellular location is the cell junction. The protein localises to the golgi apparatus. The protein resides in the trans-Golgi network. Involved in the regulation of cell migration. May be involved in mediating the organization of the parallel fibers of granule cells during cerebellar development. The protein is Protocadherin Fat 2 (Fat2) of Rattus norvegicus (Rat).